Reading from the N-terminus, the 129-residue chain is Serum amyloid A-4 protein (129 aa).

The signal sequence occupies residues 1–18; it reads MKLLIGILFCTLIMGVTG. A compositionally biased stretch (basic and acidic residues) spans 107–121; sequence AEEWGRSGQDPDHFR. The interval 107–129 is disordered; the sequence is AEEWGRSGQDPDHFRPAGLPKKY.

Belongs to the SAA family. Apolipoprotein of the HDL complex.

It localises to the secreted. Major acute phase reactant. This is Serum amyloid A-4 protein from Bos taurus (Bovine).